A 192-amino-acid polypeptide reads, in one-letter code: 21.7 kDa class VI heat shock protein (192 aa).

The sHSP domain occupies 80 to 192; it reads SLRSLGQCRV…IPKINSKNKF (113 aa).

The protein belongs to the small heat shock protein (HSP20) family. As to quaternary structure, may form oligomeric structures.

The protein localises to the cytoplasm. The sequence is that of 21.7 kDa class VI heat shock protein (HSP21.7) from Arabidopsis thaliana (Mouse-ear cress).